The sequence spans 350 residues: 2-oxoglutarate and iron-dependent oxygenase domain-containing protein 2 (350 aa).

The Fe2OG dioxygenase domain maps to 215-309 (DSHRAFVVKY…RWNLVVWLRA (95 aa)). Positions 235, 237, and 290 each coordinate Fe cation. Arg300 contacts 2-oxoglutarate.

The protein belongs to the OGFOD2 family. The cofactor is Fe(2+). Requires L-ascorbate as cofactor.

The chain is 2-oxoglutarate and iron-dependent oxygenase domain-containing protein 2 (OGFOD2) from Homo sapiens (Human).